The chain runs to 449 residues: Signal recognition particle protein (449 aa).

GTP contacts are provided by residues 109 to 116 (GLQGSGKT), 191 to 195 (DTAGR), and 249 to 252 (SRID).

It belongs to the GTP-binding SRP family. SRP54 subfamily. Part of the signal recognition particle protein translocation system, which is composed of SRP and FtsY. SRP is a ribonucleoprotein composed of Ffh and a 4.5S RNA molecule.

The protein localises to the cytoplasm. It carries out the reaction GTP + H2O = GDP + phosphate + H(+). Functionally, involved in targeting and insertion of nascent membrane proteins into the cytoplasmic membrane. Binds to the hydrophobic signal sequence of the ribosome-nascent chain (RNC) as it emerges from the ribosomes. The SRP-RNC complex is then targeted to the cytoplasmic membrane where it interacts with the SRP receptor FtsY. Interaction with FtsY leads to the transfer of the RNC complex to the Sec translocase for insertion into the membrane, the hydrolysis of GTP by both Ffh and FtsY, and the dissociation of the SRP-FtsY complex into the individual components. This Rickettsia felis (strain ATCC VR-1525 / URRWXCal2) (Rickettsia azadi) protein is Signal recognition particle protein.